A 564-amino-acid chain; its full sequence is Bifunctional protein CrtB/UppS (564 aa).

Asp-329 is an active-site residue. Position 329 (Asp-329) interacts with Mg(2+). Residues 330–333 (GNRR), Trp-334, His-346, and 374–376 (STE) each bind substrate. The active-site Proton acceptor is Asn-377. Residues Trp-378, Arg-380, Arg-497, and 502 to 504 (RIS) each bind substrate. Residue Glu-515 coordinates Mg(2+).

This sequence in the N-terminal section; belongs to the phytoene/squalene synthase family. In the C-terminal section; belongs to the UPP synthase family. Homodimer. Requires Mg(2+) as cofactor.

The enzyme catalyses 2 (2E,6E,10E)-geranylgeranyl diphosphate = 15-cis-phytoene + 2 diphosphate. It functions in the pathway carotenoid biosynthesis; phytoene biosynthesis; all-trans-phytoene from geranylgeranyl diphosphate: step 1/1. Its function is as follows. Catalyzes the reaction from prephytoene diphosphate to phytoene. Functionally, catalyzes the condensation of isopentenyl diphosphate (IPP) with allylic pyrophosphates generating different type of terpenoids. The protein is Bifunctional protein CrtB/UppS (crtB/uppS3) of Streptomyces coelicolor (strain ATCC BAA-471 / A3(2) / M145).